A 407-amino-acid chain; its full sequence is PWWP domain-containing protein 3 (407 aa).

Positions 1–46 (MMVARTRSQKRKLEEINNQKKIKTKKKATGQQTSNTKNLRDVKKKG) are disordered. Residues 63–129 (NGEYVLAKMS…SSNVLPLTVD (67 aa)) enclose the PWWP domain. A phosphoserine mark is found at Ser-160 and Ser-162. The tract at residues 163 to 248 (DVEEDEFEPE…PIPSPKKTAK (86 aa)) is disordered. Positions 172 to 208 (ENTRKKLQKPIEKPKKEKIEATPKIDGGKRLKNEKSS) are enriched in basic and acidic residues. Phosphoserine occurs at positions 236, 238, and 242.

In terms of assembly, component of the mst2 complex composed of at least eaf6, mst2, nto1, pdp3, ptf1, ptf2 and tfg3.

It is found in the nucleus. In terms of biological role, component of the mst2 complex which is a highly specific H3 lysine 14 (H3K14) acetyltransferase that functions together with gcn5 to regulate global levels of H3K14 acetylation (H3K14ac), critical for DNA damage checkpoint activation. This is PWWP domain-containing protein 3 (pdp3) from Schizosaccharomyces pombe (strain 972 / ATCC 24843) (Fission yeast).